The following is a 206-amino-acid chain: MKKLLCAVLLSPLLYSNAVLADDAKQLRETLNGTESLKADFKQTVTDINKKVIQTGAGVFALAHPNQFYWHLTAPDESQIVADGKDLWIYNPFAEEVVIMDFAEAINASPIALLVHRDDATWSQYSVTKKQDCYEIKPKSTDAGITSVNVCFNNGTLNKFNVLDDKGNLSQFDLSNQHSISAADKSLFKFVLPENVDVDDQRLKTQ.

An N-terminal signal peptide occupies residues M1–A21.

This sequence belongs to the LolA family. Monomer.

Its subcellular location is the periplasm. Its function is as follows. Participates in the translocation of lipoproteins from the inner membrane to the outer membrane. Only forms a complex with a lipoprotein if the residue after the N-terminal Cys is not an aspartate (The Asp acts as a targeting signal to indicate that the lipoprotein should stay in the inner membrane). The polypeptide is Outer-membrane lipoprotein carrier protein (Shewanella sp. (strain MR-7)).